We begin with the raw amino-acid sequence, 172 residues long: MVEKRDSYTKEDLEASGRGELFGAGGPPLPAGNMLMMDRVVKMTEDGGTHNKGYVEAELDINPDLWFFGCHFIGDPVMPGCLGLDAMWQLVGFYLGWLGGEGKGRALGVGEVKFTGQVLPTAKKVTYRINFKRVIIRKLIMGVADGEVLVDGQVIYTASDLKVGLFKDTAAF.

Residue H71 is part of the active site.

Belongs to the thioester dehydratase family. FabA subfamily. In terms of assembly, homodimer.

It localises to the cytoplasm. The catalysed reaction is a (3R)-hydroxyacyl-[ACP] = a (2E)-enoyl-[ACP] + H2O. The enzyme catalyses (3R)-hydroxydecanoyl-[ACP] = (2E)-decenoyl-[ACP] + H2O. It carries out the reaction (2E)-decenoyl-[ACP] = (3Z)-decenoyl-[ACP]. The protein operates within lipid metabolism; fatty acid biosynthesis. Necessary for the introduction of cis unsaturation into fatty acids. Catalyzes the dehydration of (3R)-3-hydroxydecanoyl-ACP to E-(2)-decenoyl-ACP and then its isomerization to Z-(3)-decenoyl-ACP. Can catalyze the dehydratase reaction for beta-hydroxyacyl-ACPs with saturated chain lengths up to 16:0, being most active on intermediate chain length. This is 3-hydroxydecanoyl-[acyl-carrier-protein] dehydratase from Serratia proteamaculans (strain 568).